The primary structure comprises 120 residues: Urease subunit beta (120 aa).

The protein belongs to the urease beta subunit family. Heterotrimer of UreA (gamma), UreB (beta) and UreC (alpha) subunits. Three heterotrimers associate to form the active enzyme.

It localises to the cytoplasm. The catalysed reaction is urea + 2 H2O + H(+) = hydrogencarbonate + 2 NH4(+). It participates in nitrogen metabolism; urea degradation; CO(2) and NH(3) from urea (urease route): step 1/1. This Corynebacterium efficiens (strain DSM 44549 / YS-314 / AJ 12310 / JCM 11189 / NBRC 100395) protein is Urease subunit beta.